Reading from the N-terminus, the 109-residue chain is Cell division protein ZapA (109 aa).

Residues 21–99 (PEQRDALNQA…IEQALLEQGR (79 aa)) are a coiled coil.

The protein belongs to the ZapA family. Type 1 subfamily. As to quaternary structure, homodimer. Interacts with FtsZ.

It localises to the cytoplasm. In terms of biological role, activator of cell division through the inhibition of FtsZ GTPase activity, therefore promoting FtsZ assembly into bundles of protofilaments necessary for the formation of the division Z ring. It is recruited early at mid-cell but it is not essential for cell division. This chain is Cell division protein ZapA, found in Klebsiella pneumoniae subsp. pneumoniae (strain ATCC 700721 / MGH 78578).